A 136-amino-acid chain; its full sequence is Histone H3.Y (136 aa).

Over residues 1–16 (MARTKQTARKATAWQA) the composition is skewed to low complexity. A disordered region spans residues 1-43 (MARTKQTARKATAWQAPRKPLATKAAGKRAPPTGGIKKPHRYK). R3 is modified (asymmetric dimethylarginine). R3 is modified (citrulline; alternate). T4 is subject to Phosphothreonine. At K5 the chain carries Allysine; alternate. K5 is subject to N6,N6,N6-trimethyllysine; alternate. K5 is modified (N6,N6-dimethyllysine; alternate). K5 carries the post-translational modification N6-(2-hydroxyisobutyryl)lysine; alternate. K5 carries the post-translational modification N6-(beta-hydroxybutyryl)lysine; alternate. At K5 the chain carries N6-acetyllysine; alternate. K5 is modified (N6-crotonyllysine; alternate). K5 bears the N6-methyllysine; alternate mark. Q6 carries the post-translational modification 5-glutamyl dopamine; alternate. Q6 carries the post-translational modification 5-glutamyl serotonin; alternate. At T7 the chain carries Phosphothreonine. R9 carries the post-translational modification Citrulline; alternate. R9 carries the post-translational modification Symmetric dimethylarginine. An N6,N6,N6-trimethyllysine; alternate modification is found at K10. Position 10 is an N6,N6-dimethyllysine; alternate (K10). N6-(2-hydroxyisobutyryl)lysine; alternate is present on K10. The residue at position 10 (K10) is an N6-(beta-hydroxybutyryl)lysine; alternate. Residue K10 is modified to N6-acetyllysine; alternate. Position 10 is an N6-crotonyllysine; alternate (K10). N6-methyllysine; alternate is present on K10. Position 10 is an N6-butyryllysine; alternate (K10). K10 is subject to N6-lactoyllysine; alternate. A Phosphothreonine modification is found at T12. At R18 the chain carries Asymmetric dimethylarginine. Citrulline; alternate is present on R18. N6-(2-hydroxyisobutyryl)lysine; alternate occurs at positions 19, 24, 28, and 37. 3 positions are modified to N6-(beta-hydroxybutyryl)lysine; alternate: K19, K24, and K28. Residues K19, K24, K28, and K37 each carry the N6-acetyllysine; alternate modification. N6-crotonyllysine; alternate occurs at positions 19, 24, and 28. Residues K19, K24, K28, and K37 each carry the N6-methyllysine; alternate modification. 2 positions are modified to N6-butyryllysine; alternate: K19 and K24. Residues K19, K24, and K28 each carry the N6-lactoyllysine; alternate modification. N6-glutaryllysine; alternate is present on residues K19, K24, and K28. K28 and K37 each carry N6,N6,N6-trimethyllysine; alternate. An N6,N6-dimethyllysine; alternate mark is found at K28 and K37. Position 38 is an N6-methyllysine (K38). Y42 is subject to Phosphotyrosine. K57 bears the N6,N6,N6-trimethyllysine; alternate mark. At K57 the chain carries N6-(2-hydroxyisobutyryl)lysine; alternate. Residue K57 is modified to N6-(beta-hydroxybutyryl)lysine; alternate. The residue at position 57 (K57) is an N6-acetyllysine; alternate. Residue K57 is modified to N6-crotonyllysine; alternate. Residue K57 is modified to N6-lactoyllysine; alternate. K57 is subject to N6-glutaryllysine; alternate. K57 bears the N6-methyllysine mark. K57 bears the N6-succinyllysine; alternate mark. S58 carries the post-translational modification Phosphoserine. K65 carries the post-translational modification N6-(2-hydroxyisobutyryl)lysine; alternate. K65 carries the N6-methyllysine; alternate modification. The residue at position 87 (S87) is a Phosphoserine. T108 bears the Phosphothreonine mark.

The protein belongs to the histone H3 family. In terms of assembly, the nucleosome is a histone octamer containing two molecules each of H2A, H2B, H3 and H4 assembled in one H3-H4 heterotetramer and two H2A-H2B heterodimers. The octamer wraps approximately 147 bp of DNA. Interacts with HIRA, a chaperone required for its incorporation into nucleosomes. Does not interact with DAXX chaperone. Post-translationally, acetylation is generally linked to gene activation. Acetylation on Lys-10 (H3K9ac) impairs methylation at Arg-9 (H3R8me2s). Acetylation on Lys-19 (H3K18ac) and Lys-24 (H3K24ac) favors methylation at Arg-18 (H3R17me). In terms of processing, citrullination at Arg-9 (H3R8ci) and/or Arg-18 (H3R17ci) impairs methylation and represses transcription. Asymmetric dimethylation at Arg-18 (H3R17me2a) is linked to gene activation. Symmetric dimethylation at Arg-9 (H3R8me2s) is linked to gene repression. Asymmetric dimethylation at Arg-3 (H3R2me2a) is linked to gene repression and is mutually exclusive with H3 Lys-5 methylation (H3K4me2 and H3K4me3). H3R2me2a is present at the 3' of genes regardless of their transcription state and is enriched on inactive promoters, while it is absent on active promoters. Post-translationally, methylation at Lys-5 (H3K4me) facilitates subsequent acetylation of H3 and H4. Methylation at Lys-10 (H3K9me) and Lys-28 (H3K27me), which are linked to gene repression, are underrepresented. Methylation at Lys-10 (H3K9me) is a specific target for HP1 proteins (CBX1, CBX3 and CBX5) and prevents subsequent acetylation of H3 and H4. In terms of processing, phosphorylation at Thr-7 (H3T6ph) is a specific tag for epigenetic transcriptional activation that prevents demethylation of Lys-5 (H3K4me) by LSD1/KDM1A. At centromeres, specifically phosphorylated at Thr-12 (H3T11ph) from prophase to early anaphase. Phosphorylation at Thr-12 (H3T11ph) is a specific tag for epigenetic transcriptional activation that promotes demethylation of Lys-10 (H3K9me). Phosphorylation at Tyr-42 (H3Y41ph) promotes exclusion of CBX5 (HP1 alpha) from chromatin. Lysine deamination at Lys-5 (H3K4all) to form allysine. Allysine formation only takes place on H3K4me3 and results in gene repression. Post-translationally, crotonylation (Kcr) is specifically present in male germ cells and marks testis-specific genes in post-meiotic cells, including X-linked genes that escape sex chromosome inactivation in haploid cells. Crotonylation marks active promoters and enhancers and confers resistance to transcriptional repressors. It is also associated with post-meiotically activated genes on autosomes. In terms of processing, butyrylation of histones marks active promoters and competes with histone acetylation. It is present during late spermatogenesis. In terms of tissue distribution, expressed at low level in some tissues, such as testis and brain.

It localises to the nucleus. The protein localises to the chromosome. Functionally, primate-specific variant histone H3, which constitutes a core component of nucleosomes. Histone H3.Y-containing nucleosomes accumulate around transcription start sites and have flexible DNA ends, suggesting that they form relaxed chromatin that allows transcription factor access. Histone H1 binds less efficiently to histone H3.Y-containing nucleosomes. Nucleosomes wrap and compact DNA into chromatin, limiting DNA accessibility to the cellular machineries which require DNA as a template. Histones thereby play a central role in transcription regulation, DNA repair, DNA replication and chromosomal stability. DNA accessibility is regulated via a complex set of post-translational modifications of histones, also called histone code, and nucleosome remodeling. This Homo sapiens (Human) protein is Histone H3.Y.